Here is a 301-residue protein sequence, read N- to C-terminus: Lipoyl synthase (301 aa).

The [4Fe-4S] cluster site is built by cysteine 50, cysteine 55, cysteine 61, cysteine 76, cysteine 80, cysteine 83, and serine 289. The Radical SAM core domain occupies 62–278; sequence WNHRTATFLL…RRYALERGFR (217 aa).

This sequence belongs to the radical SAM superfamily. Lipoyl synthase family. Requires [4Fe-4S] cluster as cofactor.

The protein resides in the cytoplasm. It carries out the reaction [[Fe-S] cluster scaffold protein carrying a second [4Fe-4S](2+) cluster] + N(6)-octanoyl-L-lysyl-[protein] + 2 oxidized [2Fe-2S]-[ferredoxin] + 2 S-adenosyl-L-methionine + 4 H(+) = [[Fe-S] cluster scaffold protein] + N(6)-[(R)-dihydrolipoyl]-L-lysyl-[protein] + 4 Fe(3+) + 2 hydrogen sulfide + 2 5'-deoxyadenosine + 2 L-methionine + 2 reduced [2Fe-2S]-[ferredoxin]. It participates in protein modification; protein lipoylation via endogenous pathway; protein N(6)-(lipoyl)lysine from octanoyl-[acyl-carrier-protein]: step 2/2. Catalyzes the radical-mediated insertion of two sulfur atoms into the C-6 and C-8 positions of the octanoyl moiety bound to the lipoyl domains of lipoate-dependent enzymes, thereby converting the octanoylated domains into lipoylated derivatives. In Roseiflexus sp. (strain RS-1), this protein is Lipoyl synthase.